Reading from the N-terminus, the 119-residue chain is UPF0102 protein Athe_0977 (119 aa).

The protein belongs to the UPF0102 family.

In Caldicellulosiruptor bescii (strain ATCC BAA-1888 / DSM 6725 / KCTC 15123 / Z-1320) (Anaerocellum thermophilum), this protein is UPF0102 protein Athe_0977.